Here is a 227-residue protein sequence, read N- to C-terminus: GTP:AMP phosphotransferase AK3, mitochondrial (227 aa).

5 residues coordinate GTP: Gly-17, Gly-19, Lys-20, Gly-21, and Thr-22. Lys-20 bears the N6-succinyllysine mark. Residue Lys-29 is modified to N6-acetyllysine; alternate. At Lys-29 the chain carries N6-succinyllysine; alternate. The residue at position 34 (Lys-34) is an N6-acetyllysine. Ser-37 bears the Phosphoserine mark. The segment at 37–66 (SSGDLLRQNMLQGTEIAVLAKSFIDQGKLI) is NMP. Residues Ser-38 and Arg-43 each coordinate AMP. At Lys-57 the chain carries N6-succinyllysine. Lys-64 and Lys-80 each carry N6-acetyllysine; alternate. 2 positions are modified to N6-succinyllysine; alternate: Lys-64 and Lys-80. AMP is bound at residue Lys-64. AMP contacts are provided by Gly-91, Arg-94, and Gln-98. The LID stretch occupies residues 127 to 164 (ARWIHPASGRVYNIEFNPPKTVGIDDLTGEPLIQREDD). The GTP site is built by Arg-128, Tyr-138, Asn-139, Arg-161, and Arg-172. N6-acetyllysine; alternate occurs at positions 174 and 189. N6-succinyllysine; alternate occurs at positions 174 and 189. A GTP-binding site is contributed by Thr-201. Lys-203 is subject to N6-acetyllysine.

It belongs to the adenylate kinase family. AK3 subfamily. In terms of assembly, monomer.

It is found in the mitochondrion matrix. It carries out the reaction a ribonucleoside 5'-triphosphate + AMP = a ribonucleoside 5'-diphosphate + ADP. The catalysed reaction is GTP + AMP = GDP + ADP. The enzyme catalyses ITP + AMP = IDP + ADP. Functionally, mitochondrial adenylate kinase with a specific GTP:AMP phosphotransferase activity. Could also use ITP as phosphate donor. Its physiological function is to recycle GTP into GDP which is necessary for the TCA cycle in the mitochondrial matrix. This is GTP:AMP phosphotransferase AK3, mitochondrial from Rattus norvegicus (Rat).